We begin with the raw amino-acid sequence, 344 residues long: N-acetyl-gamma-glutamyl-phosphate reductase (344 aa).

The active site involves Cys-149.

This sequence belongs to the NAGSA dehydrogenase family. Type 1 subfamily.

The protein resides in the cytoplasm. It carries out the reaction N-acetyl-L-glutamate 5-semialdehyde + phosphate + NADP(+) = N-acetyl-L-glutamyl 5-phosphate + NADPH + H(+). The protein operates within amino-acid biosynthesis; L-arginine biosynthesis; N(2)-acetyl-L-ornithine from L-glutamate: step 3/4. Its function is as follows. Catalyzes the NADPH-dependent reduction of N-acetyl-5-glutamyl phosphate to yield N-acetyl-L-glutamate 5-semialdehyde. In Thermoanaerobacter pseudethanolicus (strain ATCC 33223 / 39E) (Clostridium thermohydrosulfuricum), this protein is N-acetyl-gamma-glutamyl-phosphate reductase.